The primary structure comprises 500 residues: MSRSLTGALAHSFLGQSPRWYKAVIALFLVLNPLLLATLGPVVTGWVLVIQFIFTLGMALKCYPLMPGGLLLVEALLLRMTTPEALYEELQHNFPVILLLMFMVAGIHFMKELLLFLFSRILLGVRSKAVLSLLFCVLSAFLSAFLDALTVTAVIISAAVGFYAVYHRVASGTNPREESALDSDHQVEQLHREDLDQFRAFLRSLLMHGAVGTALGGVCTLVGEPQNLLIGHEMGWHFADFFLKVAPVSMPVLAAGLVTCVLLEKLRLFGYGTLMPERVRQVLAAYAAEDDAARTQAQRIALVVQGLAALILIVCLGLHIAEVGLIGLMVIVLITAFTGITDEHRLGRAFQDAMPFTALLVVFFAVVAVIHQQQLFSPLIAWVLALPSEQQPGMLYLANGLLSAISDNVFVATIYITEVKQAFVNGAMSREHFETLAVAINTGTNLPSVATPNGQAAFLFLLTSAIAPLIRLSYGRMVWMALPYTVVMGGLGWWAVTYWL.

12 helical membrane passes run 34 to 54, 58 to 78, 96 to 116, 129 to 149, 150 to 170, 205 to 225, 241 to 261, 311 to 331, 350 to 370, 394 to 414, 450 to 470, and 477 to 497; these read LLLA…QFIF, MALK…ALLL, VILL…LLLF, AVLS…LDAL, TVTA…HRVA, LLMH…VGEP, FFLK…VTCV, ILIV…LMVI, FQDA…VAVI, MLYL…VATI, ATPN…APLI, and MVWM…WAVT.

Belongs to the NhaB Na(+)/H(+) (TC 2.A.34) antiporter family.

The protein resides in the cell inner membrane. It carries out the reaction 2 Na(+)(in) + 3 H(+)(out) = 2 Na(+)(out) + 3 H(+)(in). Na(+)/H(+) antiporter that extrudes sodium in exchange for external protons. This Pseudomonas entomophila (strain L48) protein is Na(+)/H(+) antiporter NhaB.